The chain runs to 333 residues: MKNNYTSLKSPLDEEDELKTDHEIDLEKGPLPEYDSEEEGALPPYSDHALVNNPPNTHRENHSSGTTDNSSPLLIKLLISFTSIILFNAPAVCYLKYKDAFFKNYGAVEWTLFGFWCFVCTLALIFLTYFYETWTKAVKVTVISLAQCVKVTAVFLAKCVKVTAVGLYNSREKWVVIIWLLWVVICYTLFLRAKFGNLNLDKALICSTCSISAALLLFLLYVRLPFWTLKHMFSGLFQVLGVQSCVVIVQKGLMHLFDKHIDGTGYEIEASSLFVIGNFLFFYEMECPGALKRMPKFIRNGIASFLGGIANAIGGANDNNDIPLEETEAESEV.

Positions 1–69 are disordered; it reads MKNNYTSLKS…ENHSSGTTDN (69 aa). Positions 19–30 are enriched in basic and acidic residues; sequence KTDHEIDLEKGP. 4 helical membrane-spanning segments follow: residues 73 to 95, 108 to 130, 174 to 191, and 204 to 226; these read LLIKLLISFTSIILFNAPAVCYL, VEWTLFGFWCFVCTLALIFLTYF, WVVIIWLLWVVICYTLFL, and LICSTCSISAALLLFLLYVRLPF.

The protein belongs to the WTF family. Homomer. Interacts with other proteins that exhibit high sequence similarity.

The protein localises to the spore membrane. The protein resides in the vacuole membrane. Acts as a suppressor component of the dual wtf meiotic drive system, and can suppress but not confer meiotic drive by compatible poisons. Wtf meiotic drive systems promote unequal transmission of alleles from the parental zygote to progeny spores by encoding a poison and an antidote from the same locus; the poison is trans-acting and forms toxic aggregates in all spores within an ascus, wherease the antidote is spore-specific and targets aggregates for degradation by the vacuole. Meiotic drive by wtf systems therefore lead to poisoning of all progeny that do not inherit the dual poison/antidote allele, or express a compatible antidote. In Schizosaccharomyces pombe (strain 972 / ATCC 24843) (Fission yeast), this protein is Meiotic drive suppressor wtf9.